The following is a 265-amino-acid chain: Probable ribose-5-phosphate isomerase 2 (265 aa).

At Ala2 the chain carries N-acetylalanine. Ser96 bears the Phosphoserine mark.

This sequence belongs to the ribose 5-phosphate isomerase family.

It is found in the cytoplasm. It carries out the reaction aldehydo-D-ribose 5-phosphate = D-ribulose 5-phosphate. Its pathway is carbohydrate degradation; pentose phosphate pathway; D-ribose 5-phosphate from D-ribulose 5-phosphate (non-oxidative stage): step 1/1. Functionally, catalyzes the reversible conversion of ribose-5-phosphate to ribulose 5-phosphate. In Arabidopsis thaliana (Mouse-ear cress), this protein is Probable ribose-5-phosphate isomerase 2 (RPI2).